The primary structure comprises 208 residues: MGRKRSASSSRWLNEHFKDPFVQKAHKQKLRSRAYFKLDEIQQTDRLFKPGMTVVDLGAAPGGWSQYAVTQIGSKGRIIACDILEMDPIVGVDFLQGDFRDENVLAALLERVGESKVDVVMSDMAPNFSGMPSVDIPRAMYLVELALDMCKQVLTANGSFVVKVFQGEGFDEYLREIRSLFKVVKVRKPEASRGRSREVYIVAIGYKY.

Residues Gly-62, Trp-64, Asp-82, Asp-98, and Asp-123 each contribute to the S-adenosyl-L-methionine site. The active-site Proton acceptor is Lys-163.

This sequence belongs to the class I-like SAM-binding methyltransferase superfamily. RNA methyltransferase RlmE family.

Its subcellular location is the cytoplasm. It carries out the reaction uridine(2552) in 23S rRNA + S-adenosyl-L-methionine = 2'-O-methyluridine(2552) in 23S rRNA + S-adenosyl-L-homocysteine + H(+). Specifically methylates the uridine in position 2552 of 23S rRNA at the 2'-O position of the ribose in the fully assembled 50S ribosomal subunit. The chain is Ribosomal RNA large subunit methyltransferase E from Actinobacillus succinogenes (strain ATCC 55618 / DSM 22257 / CCUG 43843 / 130Z).